The following is a 347-amino-acid chain: Magnesium-chelatase subunit ChlI (347 aa).

Residue D41 to T48 coordinates ATP.

The protein belongs to the Mg-chelatase subunits D/I family.

The protein resides in the plastid. The protein localises to the cyanelle. The catalysed reaction is protoporphyrin IX + Mg(2+) + ATP + H2O = Mg-protoporphyrin IX + ADP + phosphate + 3 H(+). Its pathway is porphyrin-containing compound metabolism; chlorophyll biosynthesis. In terms of biological role, involved in chlorophyll biosynthesis; introduces a magnesium ion into protoporphyrin IX to yield Mg-protoporphyrin IX. The chain is Magnesium-chelatase subunit ChlI (chlI) from Cyanophora paradoxa.